The following is a 599-amino-acid chain: Sulfite reductase [NADPH] flavoprotein alpha-component (599 aa).

In terms of domain architecture, Flavodoxin-like spans 64 to 202 (ITIISASQTG…AASEWRARVV (139 aa)). Residues 70 to 75 (SQTGNA), 117 to 120 (STQG), and 153 to 162 (LGDSSYEFFC) contribute to the FMN site. The FAD-binding FR-type domain occupies 234–448 (DAPLVASLSV…IEHNDNFRLP (215 aa)). Residues Thr-322, Ala-356, 386 to 389 (RLYS), 404 to 406 (TVG), Tyr-410, and 419 to 422 (GGAS) each bind FAD. NADP(+)-binding positions include 519–520 (SR), 525–529 (KVYVQ), and Asp-561. Position 599 (Tyr-599) interacts with FAD.

The protein belongs to the NADPH-dependent sulphite reductase flavoprotein subunit CysJ family. This sequence in the N-terminal section; belongs to the flavodoxin family. In the C-terminal section; belongs to the flavoprotein pyridine nucleotide cytochrome reductase family. As to quaternary structure, alpha(8)-beta(8). The alpha component is a flavoprotein, the beta component is a hemoprotein. It depends on FAD as a cofactor. The cofactor is FMN.

The enzyme catalyses hydrogen sulfide + 3 NADP(+) + 3 H2O = sulfite + 3 NADPH + 4 H(+). The protein operates within sulfur metabolism; hydrogen sulfide biosynthesis; hydrogen sulfide from sulfite (NADPH route): step 1/1. Component of the sulfite reductase complex that catalyzes the 6-electron reduction of sulfite to sulfide. This is one of several activities required for the biosynthesis of L-cysteine from sulfate. The flavoprotein component catalyzes the electron flow from NADPH -&gt; FAD -&gt; FMN to the hemoprotein component. This Escherichia coli (strain K12) protein is Sulfite reductase [NADPH] flavoprotein alpha-component.